The chain runs to 184 residues: Guanylate kinase (184 aa).

In terms of domain architecture, Guanylate kinase-like spans 5–183; sequence NGLIVITGPS…ALLEIKKLIK (179 aa). 12 to 19 contacts ATP; the sequence is GPSGVGKG.

This sequence belongs to the guanylate kinase family.

The protein localises to the cytoplasm. It carries out the reaction GMP + ATP = GDP + ADP. Functionally, essential for recycling GMP and indirectly, cGMP. The polypeptide is Guanylate kinase (Prochlorococcus marinus (strain SARG / CCMP1375 / SS120)).